Consider the following 380-residue polypeptide: Probable inactive dehydrogenase easA (380 aa).

FMN is bound by residues proline 25–threonine 27, alanine 60, glutamine 102, and histidine 171. Histidine 171 and asparagine 174 together coordinate substrate. FMN contacts are provided by residues lysine 223, glycine 299, glycine 324–arginine 325, and arginine 325. Tyrosine 352 serves as a coordination point for substrate.

It belongs to the NADH:flavin oxidoreductase/NADH oxidase family.

In terms of biological role, probable inactive dehydrogenase; part of the gene cluster that mediates the biosynthesis of fungal ergot alkaloid. DmaW catalyzes the first step of ergot alkaloid biosynthesis by condensing dimethylallyl diphosphate (DMAP) and tryptophan to form 4-dimethylallyl-L-tryptophan. The second step is catalyzed by the methyltransferase easF that methylates 4-dimethylallyl-L-tryptophan in the presence of S-adenosyl-L-methionine, resulting in the formation of 4-dimethylallyl-L-abrine. The catalase easC and the FAD-dependent oxidoreductase easE then transform 4-dimethylallyl-L-abrine to chanoclavine-I which is further oxidized by easD in the presence of NAD(+), resulting in the formation of chanoclavine-I aldehyde. Agroclavine dehydrogenase easG then mediates the conversion of chanoclavine-I aldehyde to agroclavine via a non-enzymatic adduct reaction: the substrate is an iminium intermediate that is formed spontaneously from chanoclavine-I aldehyde in the presence of glutathione. The presence of easA is not required to complete this reaction. Further conversion of agroclavine to paspalic acid is a two-step process involving oxidation of agroclavine to elymoclavine and of elymoclavine to paspalic acid, the second step being performed by the elymoclavine oxidase cloA. Paspalic acid is then further converted to D-lysergic acid. Ergopeptines are assembled from D-lysergic acid and three different amino acids by the D-lysergyl-peptide-synthetases composed each of a monomudular and a trimodular nonribosomal peptide synthetase subunit. LpsB and lpsC encode the monomodular subunits responsible for D-lysergic acid activation and incorporation into the ergopeptine backbone. LpsA1 and A2 subunits encode the trimodular nonribosomal peptide synthetase assembling the tripeptide portion of ergopeptines. LpsA1 is responsible for formation of the major ergopeptine, ergotamine, and lpsA2 for alpha-ergocryptine, the minor ergopeptine of the total alkaloid mixture elaborated by C.purpurea. D-lysergyl-tripeptides are assembled by the nonribosomal peptide synthetases and released as N-(D-lysergyl-aminoacyl)-lactams. Cyclolization of the D-lysergyl-tripeptides is performed by the Fe(2+)/2-ketoglutarate-dependent dioxygenase easH which introduces a hydroxyl group into N-(D-lysergyl-aminoacyl)-lactam at alpha-C of the aminoacyl residue followed by spontaneous condensation with the terminal lactam carbonyl group. The protein is Probable inactive dehydrogenase easA of Claviceps purpurea (strain 20.1) (Ergot fungus).